The following is a 491-amino-acid chain: Cytochrome P450 2F2 (491 aa).

Cys436 contributes to the heme binding site.

Belongs to the cytochrome P450 family. It depends on heme as a cofactor.

Its subcellular location is the endoplasmic reticulum membrane. The protein resides in the microsome membrane. Its function is as follows. Involved in the regio- and stereoselective transformation of naphthalene to trans-1R-hydroxy-2R-glutathionyl-1,2-dihydronaphthalene in the presence of glutathione and glutathione S-transferases. It specifically catalyzes the production of a very reactive and potentially toxic intermediate, the 2R,2S arene oxide, that is associated with necrosis of the unciliated bronchiolar epithelial cells or club cells in lung. The chain is Cytochrome P450 2F2 (Cyp2f2) from Rattus norvegicus (Rat).